The primary structure comprises 102 residues: MVRYRVRSPSEPSHEVYRQQLHGQEQGHHGQEEQGLSPEHVEVYERTHGHSHYRRRHCSRRRLRRIHRQQHRSCRRRKRRSCRHRRRHRRGCRTRRRTCRKH.

Positions 1–102 are disordered; that stretch reads MVRYRVRSPS…RTRRRTCRKH (102 aa). 3 positions are modified to phosphoserine: Ser-8, Ser-10, and Ser-37. Residues 39–48 are compositionally biased toward basic and acidic residues; it reads EHVEVYERTH. Basic residues predominate over residues 49-102; the sequence is GHSHYRRRHCSRRRLRRIHRQQHRSCRRRKRRSCRHRRRHRRGCRTRRRTCRKH.

This sequence belongs to the protamine P2 family. As to quaternary structure, interacts with TDRP. Post-translationally, proteolytic processing into mature chains is required for histone eviction during spermatogenesis. Transition proteins (TNP1 and TNP2) are required for processing. As to expression, testis.

Its subcellular location is the nucleus. The protein localises to the chromosome. Its function is as follows. Protamines substitute for histones in the chromatin of sperm during the haploid phase of spermatogenesis. They compact sperm DNA into a highly condensed, stable and inactive complex. The protein is Protamine-2 (PRM2) of Pan paniscus (Pygmy chimpanzee).